A 450-amino-acid chain; its full sequence is LanC-like protein 2 (450 aa).

Residue glycine 2 is the site of N-myristoyl glycine attachment. Residues 2 to 15 are interaction with inositol phospholipids; sequence GETMSKRLKLHLGG. Residue tyrosine 198 is modified to Phosphotyrosine.

This sequence belongs to the LanC-like protein family. In terms of assembly, interacts with an array of inositol phospholipids such as phosphatidylinositol 3-phosphate (PI3P), phosphatidylinositol 4-phosphate (PI4P) and phosphatidylinositol 5-phosphate (PI5P). PIP-binding enhances membrane association. In terms of processing, myristoylated. Essential for membrane association. In terms of tissue distribution, expressed in brain and testis.

It localises to the nucleus. The protein localises to the cytoplasm. Its subcellular location is the cell membrane. In terms of biological role, necessary for abscisic acid (ABA) binding on the cell membrane and activation of the ABA signaling pathway in granulocytes. The sequence is that of LanC-like protein 2 (LANCL2) from Homo sapiens (Human).